An 80-amino-acid chain; its full sequence is Homeobox protein 7 (80 aa).

A DNA-binding region (homeobox) is located at residues 8–67 (SNIRNIRSSGISTKKLEDFFSINQYPNKNEIKDFANYYQCDETKIKNWFKGKRDRLKKKS). The segment at 60 to 80 (RDRLKKKSSNNEKSGNKFYFK) is disordered. The span at 70–80 (NEKSGNKFYFK) shows a compositional bias: low complexity.

The protein resides in the nucleus. Putative transcription factor. The sequence is that of Homeobox protein 7 (hbx7) from Dictyostelium discoideum (Social amoeba).